Reading from the N-terminus, the 160-residue chain is Nitrate reductase [NADH] (160 aa).

T37 is a binding site for FAD.

The protein belongs to the nitrate reductase family. As to quaternary structure, homodimer. Requires FAD as cofactor. Heme is required as a cofactor. The cofactor is Mo-molybdopterin.

The catalysed reaction is nitrite + NAD(+) + H2O = nitrate + NADH + H(+). Its function is as follows. Nitrate reductase is a key enzyme involved in the first step of nitrate assimilation in plants, fungi and bacteria. The sequence is that of Nitrate reductase [NADH] (NIA) from Lotus tetragonolobus (Winged pea).